The chain runs to 334 residues: F420-dependent glucose-6-phosphate dehydrogenase (334 aa).

Residue Asp38 coordinates coenzyme F420-(gamma-Glu)n. Catalysis depends on His39, which acts as the Proton donor. Coenzyme F420-(gamma-Glu)n is bound by residues Thr75 and 106 to 107 (TG). The active-site Proton acceptor is the Glu108. Coenzyme F420-(gamma-Glu)n is bound by residues Asn111, 175–176 (GG), and 178–179 (LV). Residues Thr193, Lys196, Lys257, and Arg281 each coordinate substrate.

Belongs to the F420-dependent glucose-6-phosphate dehydrogenase family. In terms of assembly, homodimer.

It carries out the reaction oxidized coenzyme F420-(gamma-L-Glu)(n) + D-glucose 6-phosphate + H(+) = 6-phospho-D-glucono-1,5-lactone + reduced coenzyme F420-(gamma-L-Glu)(n). In terms of biological role, catalyzes the coenzyme F420-dependent oxidation of glucose 6-phosphate (G6P) to 6-phosphogluconolactone. In Kribbella flavida (strain DSM 17836 / JCM 10339 / NBRC 14399), this protein is F420-dependent glucose-6-phosphate dehydrogenase.